We begin with the raw amino-acid sequence, 58 residues long: uncharacterized protein (58 aa).

The protein localises to the plastid. It is found in the chloroplast. This is an uncharacterized protein from Pyropia yezoensis (Susabi-nori).